Here is a 1682-residue protein sequence, read N- to C-terminus: MDDDNLDELVAHSPGPDGPPRVGSSELASDAEESSNGQSGDSEDDTGSEQDDDTDGEETEGLSEEEDPEDRSGSEDSEDGVEMATAAIETQGKLEASSVPNSDDDAESCPICLNAFRDQAVGTPETCAHYFCLDCIIEWSRNANSCPVDRTVFKCICIRAQFNGKILKKIPVENTKACEAEEEDPTFCEVCGRSDREDRLLLCDGCDAGYHMECLDPPLQEVPVDEWFCPECTVPGVDPTHDAAPVSDEEVSLLLADVVPTTSRLRPRVGRTRAIARTRQSERVRATVNRNRISSARRVQHVPRYLMSSLLDETIEAVATGLSTAVYQRPLTPRVPAKRKRKAGRRKKVLGRKKTRSRSSVKSKSGSTRAKKRQHRVRKTKGRKLKNEVTARSRIARTLGLRRPVRGTSMPSVYKPVDPSLGLMRADIGAASLSLFGDPYELDPFDSNEEQSADPPSPLSAKRRVLSRSALQSHQPVARPVAMGLSRRQLPAVAPEPSVEEAPVPDLLGSILSGQSLLMMSSADVVIHRDGSLSAKRAAPVSLQRNSVTQSREESRLRDNPQPGALPSESASGGFVGDRQPNSGLSCGNRTALCCLPARIAQTPVRSDPSLTPRSGLSRTLSDENRPSRTHSSSPQLNGSNVRVSSASTKIVTHSSFPSKNTASGLPQRTGPRRPDFSKLPRIPKIHRDGNKSTQDQAPASGHIVELPSTCISRLTGREGPGQPGRGRVDSEPSSRGPQETGSHTSGSRPPAPSSHGSLAHLGPSRGKGIGSSFESFRINIPGNTAHCSQLSSPGFCNTFRPVDSKVQRKETPFPLFSIKKPKQLKSEIYDPFDPTGSDSSPPSSSPESLGPGLLPSEITRTISINSPKAPAFQTVRCVTSYRVESIFGTEMEPEPQPPSEPVSGMLELLSKGSAEGTSDLEQEGLGEIEPTEIRGSTARTQRPPPPDPWDDEDEVSCTPFFGSEERTVTCVTVEEPGVLPSPDAPQITTHRIVEFRASSRSRSTSSSRSRKKTKKKKKKVAREHQRTRSSTRSGSRDRTSRSVSPVAEEHTRRHRAKTKSRRSSSDRASSQDRAKRRKDRDDRDREHRRGSWGHGRCRRKSRSRSGSPGSSSCERHESKRRKRRHSGSRSRGSSLERDRRHKHRERSRERMDKQESVTRSRERRRWRSRSPSLEHRPRRPPSREKRAHSPEKKGPVREVSPAPATQGESRQDGDHSAEPPVSEVSVLPEVVSVLPEVVVADLNPPEVPPVLAEPVAHVPEDLDYGESVEAGHVFEDFSNEAIFIQLDDMSSPPSPESTDSSPERDFPPNPILPPASLPQDSTLPTIQREVLPIHSEDISKPVPQALAPSDQSLLKQDTVEITTTTPSTPAVVPMTKDSPVLSARGWEAVRPRDAVAQAPLLRSRTLVKRVTWNLQEAEHSTPAALDRDPRTPLQRPQRPQEGDWDAEDRALIGFQQAPFSELPPPIHVLQESGLPDADPSQPPGAPRAEGLPAAGTLHSAGGILAQVYSPNMPPPLAQPSSILPYALVSQPSVQLILQGTLPLAGCGTAQSLAPVPTMPATVSELAVPTTNNSEERTATPKTAAEKTKKEEYMKKLHMQERAVEEVKLAIKPFYQKREVTKEEYKDILRKAVQKICHSKSGEINPVKVANLVKAYVDKYRHMRRHKKTEGGEEPPTQGAET.

The segment at 1 to 81 (MDDDNLDELV…SGSEDSEDGV (81 aa)) is disordered. A compositionally biased stretch (acidic residues) spans 41 to 81 (DSEDDTGSEQDDDTDGEETEGLSEEEDPEDRSGSEDSEDGV). Residues 109–150 (CPICLNAFRDQAVGTPETCAHYFCLDCIIEWSRNANSCPVDR) form an RING-type; degenerate zinc finger. Residues 185–235 (PTFCEVCGRSDREDRLLLCDGCDAGYHMECLDPPLQEVPVDEWFCPECTVP) form a PHD-type zinc finger. Disordered regions lie at residues 330 to 412 (PLTP…SMPS), 444 to 483 (PFDS…PVAM), 532 to 582 (SLSA…RQPN), 605 to 774 (VRSD…GSSF), and 825 to 856 (LKSE…GLLP). A Phosphothreonine modification is found at T332. Basic residues-rich tracts occupy residues 336–361 (PAKR…RSSV) and 369–384 (RAKK…KGRK). 2 positions are modified to phosphoserine: S447 and S457. Polar residues-rich tracts occupy residues 609–620 (PSLTPRSGLSRT), 630–667 (THSS…SGLP), and 734–748 (SSRG…TSGS). The segment covering 832–856 (PFDPTGSDSSPPSSSPESLGPGLLP) has biased composition (low complexity). S845, S846, S864, S867, S919, S982, and S1000 each carry phosphoserine. Disordered stretches follow at residues 911 to 1225 (SKGS…VSEV) and 1288 to 1322 (DDMS…PQDS). Acidic residues predominate over residues 919–931 (SDLEQEGLGEIEP). Residues 999 to 1008 (SSRSRSTSSS) are compositionally biased toward low complexity. Composition is skewed to basic residues over residues 1009–1030 (RSRK…RTRS) and 1053–1063 (RRHRAKTKSRR). A compositionally biased stretch (basic and acidic residues) spans 1064–1090 (SSSDRASSQDRAKRRKDRDDRDREHRR). 2 stretches are compositionally biased toward basic residues: residues 1091–1104 (GSWG…KSRS) and 1119–1129 (SKRRKRRHSGS). Phosphoserine is present on S1135. Basic and acidic residues-rich tracts occupy residues 1147–1161 (RSRE…VTRS) and 1182–1197 (PSRE…KGPV). S1201 carries the post-translational modification Phosphoserine. Residues 1288–1301 (DDMSSPPSPESTDS) are compositionally biased toward low complexity. Residues 1308 to 1317 (PPNPILPPAS) show a composition bias toward pro residues. Residues S1368 and S1379 each carry the phosphoserine modification. T1412 bears the Phosphothreonine mark. Disordered stretches follow at residues 1419-1445 (EHST…EGDW), 1463-1496 (LPPP…PAAG), 1567-1588 (AVPT…AEKT), and 1663-1682 (MRRH…GAET). Basic and acidic residues predominate over residues 1574 to 1588 (SEERTATPKTAAEKT). A coiled-coil region spans residues 1585-1612 (AEKTKKEEYMKKLHMQERAVEEVKLAIK).

In terms of assembly, interacts with POLR2A (via the C-terminal domain).

The chain is PHD and RING finger domain-containing protein 1 from Mus musculus (Mouse).